The sequence spans 636 residues: ATP-dependent zinc metalloprotease FtsH (636 aa).

Topologically, residues 1–12 (MKKLLENLSLWM) are cytoplasmic. Residues 13–33 (GIIILVTLLFGQVALNFGFGI) form a helical membrane-spanning segment. The Periplasmic segment spans residues 34–104 (RNEKIQFSEF…VASGDSFLGL (71 aa)). A helical membrane pass occupies residues 105 to 125 (LFNILISWFPMLLLIGVWIFF). Residues 126 to 636 (MKQMQAGGNK…ESDLDTGDKE (511 aa)) lie on the Cytoplasmic side of the membrane. 197–204 (GPPGTGKT) lines the ATP pocket. H419 serves as a coordination point for Zn(2+). E420 is a catalytic residue. Residues H423 and D497 each contribute to the Zn(2+) site.

This sequence in the central section; belongs to the AAA ATPase family. It in the C-terminal section; belongs to the peptidase M41 family. As to quaternary structure, homohexamer. The cofactor is Zn(2+).

It is found in the cell inner membrane. Acts as a processive, ATP-dependent zinc metallopeptidase for both cytoplasmic and membrane proteins. Plays a role in the quality control of integral membrane proteins. The sequence is that of ATP-dependent zinc metalloprotease FtsH from Neorickettsia risticii (strain Illinois).